A 319-amino-acid polypeptide reads, in one-letter code: Acetyl-coenzyme A carboxylase carboxyl transferase subunit alpha (319 aa).

Residues 36–293 (EVERLKTKLE…HDAFLSELDR (258 aa)) enclose the CoA carboxyltransferase C-terminal domain.

The protein belongs to the AccA family. As to quaternary structure, acetyl-CoA carboxylase is a heterohexamer composed of biotin carboxyl carrier protein (AccB), biotin carboxylase (AccC) and two subunits each of ACCase subunit alpha (AccA) and ACCase subunit beta (AccD).

The protein localises to the cytoplasm. It catalyses the reaction N(6)-carboxybiotinyl-L-lysyl-[protein] + acetyl-CoA = N(6)-biotinyl-L-lysyl-[protein] + malonyl-CoA. It participates in lipid metabolism; malonyl-CoA biosynthesis; malonyl-CoA from acetyl-CoA: step 1/1. In terms of biological role, component of the acetyl coenzyme A carboxylase (ACC) complex. First, biotin carboxylase catalyzes the carboxylation of biotin on its carrier protein (BCCP) and then the CO(2) group is transferred by the carboxyltransferase to acetyl-CoA to form malonyl-CoA. The chain is Acetyl-coenzyme A carboxylase carboxyl transferase subunit alpha from Dichelobacter nodosus (strain VCS1703A).